The primary structure comprises 834 residues: Unextended protein (834 aa).

Positions 1–20 (MNTYFISFITIIIFANGING) are cleaved as a signal peptide. At 21–182 (TSVDTSNKLL…DFLKIKTFEP (162 aa)) the chain is on the extracellular side. Residues N38, N42, and N156 are each glycosylated (N-linked (GlcNAc...) asparagine). The 180-residue stretch at 182 to 361 (PLIPVWLAII…NDVNDLDKNE (180 aa)) folds into the CNNM transmembrane domain. A helical transmembrane segment spans residues 183 to 203 (LIPVWLAIIIIVTCLGFSALF). Over 204–244 (SGLNLGLMSMDRTELKILRNTGTEKEKKYASKIAPVRDQGN) the chain is Cytoplasmic. The helical transmembrane segment at 245-265 (YLLCSILLGNVLVNSTFTILL) threads the bilayer. Residues 266-267 (DG) lie on the Extracellular side of the membrane. Residues 268-288 (LTSGLFAVIFSTLAIVLFGEI) traverse the membrane as a helical segment. The Cytoplasmic segment spans residues 289-298 (TPQAVCSRHG). A helical membrane pass occupies residues 299 to 319 (LAIGAKTILVTKTVMAITAPL). Over 320 to 834 (SYPVSRILDK…DKFESKQSKP (515 aa)) the chain is Extracellular. CBS domains follow at residues 380 to 441 (MTHI…NTPL) and 448 to 515 (YQNP…IVDE). N522 is a glycosylation site (N-linked (GlcNAc...) asparagine). A nucleoside 3',5'-cyclic phosphate is bound at residue 604–656 (YIFTQGKAVDFFVLILEGRVEVTIGKEALMFESGPFTYFGTQALVPNVVIDSP). Residues 739–765 (CFAQNQSTRRLSNRSINSSPTNMNRSP) form a disordered region. Over residues 740-763 (FAQNQSTRRLSNRSINSSPTNMNR) the composition is skewed to polar residues. Residues N743, N751, and N790 are each glycosylated (N-linked (GlcNAc...) asparagine). The tract at residues 807 to 834 (SGEQDTTAASMPLLPKLDDKFESKQSKP) is disordered. Over residues 822 to 834 (KLDDKFESKQSKP) the composition is skewed to basic and acidic residues.

The protein belongs to the ACDP family. In terms of assembly, interacts with PRL-1, possibly at the plasma membrane.

Its subcellular location is the cell membrane. Functionally, probable metal transporter. Acts downstream of PRL-1 and protects the nervous system against olfactory carbon dioxide stimulation. The protein is Unextended protein of Drosophila melanogaster (Fruit fly).